We begin with the raw amino-acid sequence, 252 residues long: Cell division protein ZapD (252 aa).

The protein belongs to the ZapD family. As to quaternary structure, interacts with FtsZ.

It localises to the cytoplasm. Cell division factor that enhances FtsZ-ring assembly. Directly interacts with FtsZ and promotes bundling of FtsZ protofilaments, with a reduction in FtsZ GTPase activity. This chain is Cell division protein ZapD, found in Chromobacterium violaceum (strain ATCC 12472 / DSM 30191 / JCM 1249 / CCUG 213 / NBRC 12614 / NCIMB 9131 / NCTC 9757 / MK).